The chain runs to 456 residues: Probable glycine dehydrogenase (decarboxylating) subunit 1 (456 aa).

Belongs to the GcvP family. N-terminal subunit subfamily. In terms of assembly, the glycine cleavage system is composed of four proteins: P, T, L and H. In this organism, the P 'protein' is a heterodimer of two subunits.

The catalysed reaction is N(6)-[(R)-lipoyl]-L-lysyl-[glycine-cleavage complex H protein] + glycine + H(+) = N(6)-[(R)-S(8)-aminomethyldihydrolipoyl]-L-lysyl-[glycine-cleavage complex H protein] + CO2. In terms of biological role, the glycine cleavage system catalyzes the degradation of glycine. The P protein binds the alpha-amino group of glycine through its pyridoxal phosphate cofactor; CO(2) is released and the remaining methylamine moiety is then transferred to the lipoamide cofactor of the H protein. This Legionella pneumophila (strain Paris) protein is Probable glycine dehydrogenase (decarboxylating) subunit 1.